Consider the following 346-residue polypeptide: NADH-ubiquinone oxidoreductase chain 2 (346 aa).

Helical transmembrane passes span 3–23 (PLIL…VMAS), 25–45 (HWLM…PILM), 59–79 (YFLT…INLM), 96–116 (IIMT…FWVP), 122–142 (ISLT…MSIL), 149–169 (INLN…GWGG), 178–198 (IMAY…VYNP), 200–220 (LTML…MLFI), 237–257 (APLI…LPPL), 274–294 (SSII…YFYM), and 322–342 (ITLL…TPML).

It belongs to the complex I subunit 2 family. Core subunit of respiratory chain NADH dehydrogenase (Complex I) which is composed of 45 different subunits. Interacts with TMEM242.

The protein localises to the mitochondrion inner membrane. The enzyme catalyses a ubiquinone + NADH + 5 H(+)(in) = a ubiquinol + NAD(+) + 4 H(+)(out). Functionally, core subunit of the mitochondrial membrane respiratory chain NADH dehydrogenase (Complex I) which catalyzes electron transfer from NADH through the respiratory chain, using ubiquinone as an electron acceptor. Essential for the catalytic activity and assembly of complex I. This is NADH-ubiquinone oxidoreductase chain 2 from Equus asinus (Donkey).